A 629-amino-acid chain; its full sequence is Chaperone protein DnaK (629 aa).

At Thr195 the chain carries Phosphothreonine; by autocatalysis. Disordered regions lie at residues Glu514–Asn533 and Leu543–Glu629. Over residues Asp555 to Met590 the composition is skewed to basic and acidic residues. Residues Thr595–Gly614 show a composition bias toward low complexity. Over residues Arg615–Glu629 the composition is skewed to basic and acidic residues.

This sequence belongs to the heat shock protein 70 family.

Acts as a chaperone. The polypeptide is Chaperone protein DnaK (Deinococcus geothermalis (strain DSM 11300 / CIP 105573 / AG-3a)).